A 308-amino-acid polypeptide reads, in one-letter code: Mycothiol acetyltransferase (308 aa).

The tract at residues 1–20 (MTSDDTAQPSGARRIETRPD) is disordered. 2 consecutive N-acetyltransferase domains span residues 15–152 (IETR…RSLT) and 165–308 (VTVR…RSET). Glutamate 47 contacts 1D-myo-inositol 2-(L-cysteinylamino)-2-deoxy-alpha-D-glucopyranoside. 91-93 (LVV) provides a ligand contact to acetyl-CoA. 1D-myo-inositol 2-(L-cysteinylamino)-2-deoxy-alpha-D-glucopyranoside-binding residues include glutamate 192, lysine 231, and glutamate 240. Acetyl-CoA contacts are provided by residues 244–246 (VGV) and 251–257 (QGGGLGK). Residue tyrosine 278 participates in 1D-myo-inositol 2-(L-cysteinylamino)-2-deoxy-alpha-D-glucopyranoside binding.

The protein belongs to the acetyltransferase family. MshD subfamily. Monomer.

The enzyme catalyses 1D-myo-inositol 2-(L-cysteinylamino)-2-deoxy-alpha-D-glucopyranoside + acetyl-CoA = mycothiol + CoA + H(+). Catalyzes the transfer of acetyl from acetyl-CoA to desacetylmycothiol (Cys-GlcN-Ins) to form mycothiol. In Streptomyces scabiei (strain 87.22), this protein is Mycothiol acetyltransferase.